The chain runs to 526 residues: Meiotically up-regulated gene 99 protein, mitochondrial (526 aa).

2 helical membrane passes run 398–418 (TLYT…LYFV) and 421–441 (FSLY…LYYL).

The protein resides in the mitochondrion membrane. Required for correct meiotic chromosome segregation. Appears to also have role in sporulation. This Schizosaccharomyces pombe (strain 972 / ATCC 24843) (Fission yeast) protein is Meiotically up-regulated gene 99 protein, mitochondrial (mug99).